The primary structure comprises 190 residues: MPLVHVMLLSCGVAADAFACSIARGTAIRVNIIKRSLILAGIFGVFQALMPVIGWGIGYFFAELSFIRAIDHWVAFLLLAGVGAKMIWDAFHQDADVDVIDTGAVQLRPALILGLATSIDALAVGMGMAFVHAPIITLALAMGLTTFVLSLVGAWMGHHGGGRFGGWATVIGGLVLIGLGGNILFDHMLG.

The next 5 helical transmembrane spans lie at 37–57 (LILA…GWGI), 64–84 (LSFI…GVGA), 111–131 (LILG…MAFV), 135–155 (IITL…VGAW), and 164–184 (FGGW…GNIL).

This sequence belongs to the MntP (TC 9.B.29) family.

Its subcellular location is the cell membrane. In terms of biological role, probably functions as a manganese efflux pump. This is Putative manganese efflux pump MntP from Corynebacterium efficiens (strain DSM 44549 / YS-314 / AJ 12310 / JCM 11189 / NBRC 100395).